The primary structure comprises 130 residues: Small ribosomal subunit protein uS9 (130 aa).

This sequence belongs to the universal ribosomal protein uS9 family.

The sequence is that of Small ribosomal subunit protein uS9 from Streptococcus agalactiae serotype Ia (strain ATCC 27591 / A909 / CDC SS700).